The sequence spans 630 residues: MELQPPEASIAVVSIPRQLPGSHSEAGVQGLSAGDDSELGSHCVAQTGLELLASGDPLPSASQNAEMIETGSDCVTQAGLQLLASSDPPALASKNAEVTGTMSQDTEVDMKEVELNELEPEKQPMNAASGAAMSLAGAEKNGLVKIKVAEDEAEAAAAAKFTGLSKEELLKVAGSPGWVRTRWALLLLFWLGWLGMLAGAVVIIVRAPRCRELPAQKWWHTGALYRIGDLQAFQGHGAGNLAGLKGRLDYLSSLKVKGLVLGPIHKNQKDDVAQTDLLQIDPNFGSKEDFDSLLQSAKKKSIRVILDLTPNYRGENSWFSTQVDTVATKVKDALEFWLQAGVDGFQVRDIENLKDASSFLAEWQNITKGFSEDRLLIAGTNSSDLQQILSLLESNKDLLLTSSYLSDSGSTGEHTKSLVTQYLNATGNRWCSWSLSQARLLTSFLPAQLLRLYQLMLFTLPGTPVFSYGDEIGLDAAALPGQPMEAPVMLWDESSFPDIPGAVSANMTVKGQSEDPGSLLSLFRRLSDQRSKERSLLHGDFHAFSAGPGLFSYIRHWDQNERFLVVLNFGDVGLSAGLQASDLPASASLPAKADLLLSTQPGREEGSPLELERLKLEPHEGLLLRFPYAA.

The residue at position 1 (methionine 1) is an N-acetylmethionine. An N-acetylserine modification is found at glutamate 2. At glutamate 2 the chain carries Phosphoserine. The tract at residues 15–39 (IPRQLPGSHSEAGVQGLSAGDDSEL) is disordered. The Cytoplasmic portion of the chain corresponds to 102–184 (MSQDTEVDMK…SPGWVRTRWA (83 aa)). A Phosphoserine modification is found at serine 103. Threonine 106 is subject to Phosphothreonine. Residue serine 134 is modified to Phosphoserine. Residue lysine 147 forms a Glycyl lysine isopeptide (Lys-Gly) (interchain with G-Cter in ubiquitin) linkage. Serine 165 carries the post-translational modification Phosphoserine. Lysine 166 participates in a covalent cross-link: Glycyl lysine isopeptide (Lys-Gly) (interchain with G-Cter in SUMO2). Residues 185 to 205 (LLLLFWLGWLGMLAGAVVIIV) traverse the membrane as a helical; Signal-anchor for type II membrane protein segment. The Extracellular portion of the chain corresponds to 206 to 630 (RAPRCRELPA…GLLLRFPYAA (425 aa)). N-linked (GlcNAc...) asparagine glycans are attached at residues asparagine 365 and asparagine 381. Residues serine 406, serine 408, and serine 410 each carry the phosphoserine modification. The N-linked (GlcNAc...) (complex) asparagine glycan is linked to asparagine 424. Asparagine 506 carries N-linked (GlcNAc...) asparagine glycosylation. Residues serine 527 and serine 531 each carry the phosphoserine modification.

As to quaternary structure, disulfide-linked heterodimer with a non-glycosylated catalytic light subunit (SLC7A5, SLC7A6, SLC7A7, SLC7A8, SLC7A10 or SLC7A11). Interacts with TLCD3A/CT120. Interacts with ICAM1. Constitutively and specifically associates with beta-1 integrins (alpha-2/beta-1, alpha-3/beta-1, alpha-5/beta-1 and alpha-6/beta-1), but minimally with alpha-4/beta-1. Interacts with LAPTM4B; recruits SLC3A2 and SLC7A5/LAT1 to lysosomes to promote leucine uptake into these organelles and is required for mTORC1 activation. In terms of assembly, (Microbial infection) Interacts with hepatitis C virus/HCV envelope glycoprotein E2; the interaction may facilitate viral entry into host cell. Post-translationally, N-glycosylated; N-glycosylation is crucial for trafficking and stability of SLC3A2 to the plasma membrane. In terms of processing, phosphorylation on Ser-406; Ser-408 or Ser-410 and on Ser-527 or Ser-531 by ecto-protein kinases favors heterotypic cell-cell interactions. Expressed ubiquitously in all tissues tested with highest levels detected in kidney, placenta and testis and weakest level in thymus. During gestation, expression in the placenta was significantly stronger at full-term than at the mid-trimester stage. Expressed in HUVECS and at low levels in resting peripheral blood T-lymphocytes and quiescent fibroblasts. Also expressed in fetal liver and in the astrocytic process of primary astrocytic gliomas. Expressed in retinal endothelial cells and in the intestinal epithelial cell line C2BBe1.

It localises to the apical cell membrane. The protein resides in the cell membrane. The protein localises to the cell junction. Its subcellular location is the lysosome membrane. It is found in the melanosome. It localises to the basolateral cell membrane. Acts as a chaperone that facilitates biogenesis and trafficking of functional transporters heterodimers to the plasma membrane. Forms heterodimer with SLC7 family transporters (SLC7A5, SLC7A6, SLC7A7, SLC7A8, SLC7A10 and SLC7A11), a group of amino-acid antiporters. Heterodimers function as amino acids exchangers, the specificity of the substrate depending on the SLC7A subunit. Heterodimers SLC3A2/SLC7A6 or SLC3A2/SLC7A7 mediate the uptake of dibasic amino acids. Heterodimer SLC3A2/SLC7A11 functions as an antiporter by mediating the exchange of extracellular anionic L-cystine and intracellular L-glutamate across the cellular plasma membrane. SLC3A2/SLC7A10 translocates small neutral L- and D-amino acids across the plasma membrane. SLC3A2/SLC75 or SLC3A2/SLC7A8 translocates neutral amino acids with broad specificity, thyroid hormones and L-DOPA. SLC3A2 is essential for plasma membrane localization, stability, and the transport activity of SLC7A5 and SLC7A8. When associated with LAPTM4B, the heterodimer SLC7A5 is recruited to lysosomes to promote leucine uptake into these organelles, and thereby mediates mTORC1 activation. Modulates integrin-related signaling and is essential for integrin-dependent cell spreading, migration and tumor progression. Functionally, (Microbial infection) In case of hepatitis C virus/HCV infection, the complex formed by SLC3A2 and SLC7A5/LAT1 plays a role in HCV propagation by facilitating viral entry into host cell and increasing L-leucine uptake-mediated mTORC1 signaling activation, thereby contributing to HCV-mediated pathogenesis. In terms of biological role, (Microbial infection) Acts as a receptor for malaria parasite Plasmodium vivax (Thai isolate) in immature red blood cells. The chain is Amino acid transporter heavy chain SLC3A2 from Homo sapiens (Human).